The sequence spans 415 residues: AP-3 complex subunit mu (415 aa).

One can recognise an MHD domain in the interval 178 to 414; sequence SNEVYVDLVE…QTRAGEFDVR (237 aa).

It belongs to the adaptor complexes medium subunit family. Adaptor protein complex 3 (AP-3) is a heterotetramer composed of two large adaptins (delta-type subunit and beta-type subunit), a medium adaptin (mu-type subunit) and a small adaptin (sigma-type subunit).

It is found in the cytoplasm. The protein resides in the golgi apparatus. Its subcellular location is the cytoplasmic vesicle membrane. Its function is as follows. Part of the AP-3 complex, an adaptor-related complex which seems to be clathrin-associated. The complex is associated with the Golgi region as well as more peripheral structures. It facilitates the budding of vesicles from the Golgi membrane and may be directly involved in trafficking to the vacuole. It also functions in maintaining the identity of lytic vacuoles and in regulating the transition between storage and lytic vacuoles. The polypeptide is AP-3 complex subunit mu (AP3M) (Arabidopsis thaliana (Mouse-ear cress)).